A 221-amino-acid polypeptide reads, in one-letter code: Deoxyribose-phosphate aldolase (221 aa).

The active-site Proton donor/acceptor is D96. Residue K157 is the Schiff-base intermediate with acetaldehyde of the active site. K185 acts as the Proton donor/acceptor in catalysis.

Belongs to the DeoC/FbaB aldolase family. DeoC type 1 subfamily.

It is found in the cytoplasm. The catalysed reaction is 2-deoxy-D-ribose 5-phosphate = D-glyceraldehyde 3-phosphate + acetaldehyde. Its pathway is carbohydrate degradation; 2-deoxy-D-ribose 1-phosphate degradation; D-glyceraldehyde 3-phosphate and acetaldehyde from 2-deoxy-alpha-D-ribose 1-phosphate: step 2/2. In terms of biological role, catalyzes a reversible aldol reaction between acetaldehyde and D-glyceraldehyde 3-phosphate to generate 2-deoxy-D-ribose 5-phosphate. In Crocosphaera subtropica (strain ATCC 51142 / BH68) (Cyanothece sp. (strain ATCC 51142)), this protein is Deoxyribose-phosphate aldolase.